We begin with the raw amino-acid sequence, 568 residues long: ATP-dependent RNA helicase MRH4, mitochondrial (568 aa).

A mitochondrion-targeting transit peptide spans 1 to 50 (MVSILAIRTFNPLGHFVSTQCVRAYAINSVRAGSKSSSVRAGSKNDTTRA). Residues 36–49 (SSSVRAGSKNDTTR) are compositionally biased toward polar residues. Positions 36–64 (SSSVRAGSKNDTTRASSKKNKAGKSKLQL) are disordered. A Q motif motif is present at residues 143-150 (EIHPSPIQ). Residues 160 to 348 (NLMEPKLQVH…TKMFPNAIPL (189 aa)) form the Helicase ATP-binding domain. 173 to 180 (AETGSGKT) lines the ATP pocket. The DEAD box signature appears at 296-299 (DEAD). In terms of domain architecture, Helicase C-terminal spans 379 to 568 (ALAQTLYAIA…TILKKNKALT (190 aa)).

This sequence belongs to the DEAD box helicase family. MRH4 subfamily.

The protein localises to the mitochondrion. It catalyses the reaction ATP + H2O = ADP + phosphate + H(+). ATP-binding RNA helicase involved in mitochondrial RNA metabolism. Required for maintenance of mitochondrial DNA. This chain is ATP-dependent RNA helicase MRH4, mitochondrial (MRH4), found in Candida glabrata (strain ATCC 2001 / BCRC 20586 / JCM 3761 / NBRC 0622 / NRRL Y-65 / CBS 138) (Yeast).